A 545-amino-acid polypeptide reads, in one-letter code: G-protein coupled receptor 161 (545 aa).

At 1-46 (MDFVQHALLTASRGALTMSLNSSLSYRKELSNLTATEGGEGGAVSE) the chain is on the extracellular side. N-linked (GlcNAc...) asparagine glycosylation is found at asparagine 21 and asparagine 32. The helical transmembrane segment at 47–67 (FIAIIIITVLVCLGNLVIVVT) threads the bilayer. At 68–80 (LYKKSYLLTLSNK) the chain is on the cytoplasmic side. The chain crosses the membrane as a helical span at residues 81 to 101 (FVFSLTLSNFLLSVLVLPFVV). At 102-117 (TSSIRREWIFGVVWCN) the chain is on the extracellular side. A disulfide bridge connects residues cysteine 116 and cysteine 194. Asparagine 117 is a glycosylation site (N-linked (GlcNAc...) asparagine). A helical membrane pass occupies residues 118–139 (FSALLYLLISSASMLTLGVIAI). Topologically, residues 140–159 (DRYYAVLYPMVYPMKITGNR) are cytoplasmic. A helical membrane pass occupies residues 160-180 (AVMALVYIWLHSLIGCLPPLF). The Extracellular segment spans residues 181–205 (GWSSVEFDEFKWMCVAAWHQEPGYT). A helical membrane pass occupies residues 206 to 226 (IFWQIWCALFPFLIMLVCYGF). Over 227–285 (IFRVARVKARKVHCGTVVTVEEDSQRSGRKNSSTSTSSSGSRRNALQGVVYSANQCKAL) the chain is Cytoplasmic. Residues 286–306 (ITILVVIGAFMVTWGPYMVVI) form a helical membrane-spanning segment. Residues 307-322 (TSEALWGKNCVSPTLE) are Extracellular-facing. The chain crosses the membrane as a helical span at residues 323–343 (TWATWLSFTSAICHPLIYGLW). The Cytoplasmic portion of the chain corresponds to 344 to 545 (NKTVRKELLG…EGNVLAAEQR (202 aa)).

The protein belongs to the G-protein coupled receptor 1 family.

The protein resides in the cell projection. The protein localises to the cilium membrane. It localises to the cell membrane. Key negative regulator of Shh signaling, which promotes the processing of GLI3 into GLI3R during neural tube development. Recruited by TULP3 and the IFT-A complex to primary cilia and acts as a regulator of the PKA-dependent basal repression machinery in Shh signaling by increasing cAMP levels, leading to promote the PKA-dependent processing of GLI3 into GLI3R and repress the Shh signaling. In presence of SHH, it is removed from primary cilia and is internalized into recycling endosomes, preventing its activity and allowing activation of the Shh signaling. Its ligand is unknown. This is G-protein coupled receptor 161 (Gpr161) from Mus musculus (Mouse).